Here is a 145-residue protein sequence, read N- to C-terminus: Transcriptional regulator MraZ (145 aa).

SpoVT-AbrB domains are found at residues 5–50 and 81–124; these read TFNH…ALPQ and AHEV…DRAA.

This sequence belongs to the MraZ family. Forms oligomers.

It is found in the cytoplasm. The protein localises to the nucleoid. The sequence is that of Transcriptional regulator MraZ from Anaeromyxobacter dehalogenans (strain 2CP-1 / ATCC BAA-258).